The following is a 563-amino-acid chain: Sulfite reductase [NADPH] hemoprotein beta-component (563 aa).

Residues Cys-426, Cys-432, Cys-472, and Cys-476 each coordinate [4Fe-4S] cluster. Cys-476 provides a ligand contact to siroheme.

Belongs to the nitrite and sulfite reductase 4Fe-4S domain family. As to quaternary structure, alpha(8)-beta(8). The alpha component is a flavoprotein, the beta component is a hemoprotein. Siroheme is required as a cofactor. It depends on [4Fe-4S] cluster as a cofactor.

It catalyses the reaction hydrogen sulfide + 3 NADP(+) + 3 H2O = sulfite + 3 NADPH + 4 H(+). It functions in the pathway sulfur metabolism; hydrogen sulfide biosynthesis; hydrogen sulfide from sulfite (NADPH route): step 1/1. Component of the sulfite reductase complex that catalyzes the 6-electron reduction of sulfite to sulfide. This is one of several activities required for the biosynthesis of L-cysteine from sulfate. The sequence is that of Sulfite reductase [NADPH] hemoprotein beta-component from Photobacterium profundum (strain SS9).